Reading from the N-terminus, the 123-residue chain is Cliotide T12 (123 aa).

An N-terminal signal peptide occupies residues 1–28; it reads MASLRIAPLALFFFLAASVMFTVEKTEA. A cross-link (cyclopeptide (Gly-Asp)) is located at residues 29–58; that stretch reads GIPCGESCVFIPCITGAIGCSCKSKVCYRD. 3 disulfide bridges follow: cysteine 32–cysteine 48, cysteine 36–cysteine 50, and cysteine 41–cysteine 55. A propeptide spans 59–123 (removed in mature form); the sequence is HVIAAEAKTM…KDHLKMSVPN (65 aa).

In terms of processing, contains 3 disulfide bonds. This is a cyclic peptide.

Functionally, probably participates in a plant defense mechanism. The protein is Cliotide T12 of Clitoria ternatea (Butterfly pea).